The following is a 260-amino-acid chain: Snake venom serine protease KN6 (260 aa).

The N-terminal stretch at 1 to 18 (MVLIRVLANLLILQLSYA) is a signal peptide. The propeptide occupies 19–24 (QKSSEL). The region spanning 25-251 (VIGGDECNIN…HLDWIQSIIA (227 aa)) is the Peptidase S1 domain. Intrachain disulfides connect Cys-31/Cys-165, Cys-100/Cys-258, Cys-144/Cys-212, Cys-176/Cys-191, and Cys-202/Cys-227. Residue His-67 is the Charge relay system of the active site. Residue Asn-105 is glycosylated (N-linked (GlcNAc...) asparagine). Catalysis depends on Asp-112, which acts as the Charge relay system. Residue Asn-172 is glycosylated (N-linked (GlcNAc...) asparagine). The active-site Charge relay system is the Ser-206. Residues Asn-213 and Asn-255 are each glycosylated (N-linked (GlcNAc...) asparagine).

It belongs to the peptidase S1 family. Snake venom subfamily. In terms of assembly, monomer. Expressed by the venom gland.

The protein resides in the secreted. Its function is as follows. Snake venom serine protease that may act in the hemostasis system of the prey. The chain is Snake venom serine protease KN6 from Trimeresurus stejnegeri (Chinese green tree viper).